A 492-amino-acid chain; its full sequence is N-succinylglutamate 5-semialdehyde dehydrogenase (492 aa).

Position 220 to 225 (220 to 225 (GSANTG)) interacts with NAD(+). Active-site residues include Glu243 and Cys277.

It belongs to the aldehyde dehydrogenase family. AstD subfamily.

The enzyme catalyses N-succinyl-L-glutamate 5-semialdehyde + NAD(+) + H2O = N-succinyl-L-glutamate + NADH + 2 H(+). It functions in the pathway amino-acid degradation; L-arginine degradation via AST pathway; L-glutamate and succinate from L-arginine: step 4/5. In terms of biological role, catalyzes the NAD-dependent reduction of succinylglutamate semialdehyde into succinylglutamate. This is N-succinylglutamate 5-semialdehyde dehydrogenase from Escherichia coli (strain SE11).